The primary structure comprises 211 residues: Superoxide dismutase [Fe] (211 aa).

Residues His-34, His-85, Asp-171, and His-175 each contribute to the Fe cation site.

It belongs to the iron/manganese superoxide dismutase family. Fe cation is required as a cofactor.

It carries out the reaction 2 superoxide + 2 H(+) = H2O2 + O2. Destroys superoxide anion radicals which are normally produced within the cells and which are toxic to biological systems. This is Superoxide dismutase [Fe] (sod) from Acidianus ambivalens (Desulfurolobus ambivalens).